The chain runs to 200 residues: Probable E3 ubiquitin-protein ligase ATL45 (200 aa).

A helical transmembrane segment spans residues 26 to 46; it reads MVVILSALLCALVCVAGLAAV. The RING-type; atypical zinc finger occupies 113-155; that stretch reads CAICITEFSEGEEIRILPLCSHAFHVACIDKWLTSRSSCPSCR.

It belongs to the RING-type zinc finger family. ATL subfamily. As to quaternary structure, interacts with BIK1.

It is found in the membrane. The catalysed reaction is S-ubiquitinyl-[E2 ubiquitin-conjugating enzyme]-L-cysteine + [acceptor protein]-L-lysine = [E2 ubiquitin-conjugating enzyme]-L-cysteine + N(6)-ubiquitinyl-[acceptor protein]-L-lysine.. Its pathway is protein modification; protein ubiquitination. E3 ubiquitin-protein ligase that possess E3 ubiquitin ligase activity in vitro and mediates protein monoubiquitination. Triggers the monoubiquitination of phosphorylated BIK1 in response to pathogen-associated molecular pattern (PAMP) detection. May be involved in the early steps of the plant defense signaling pathway. The sequence is that of Probable E3 ubiquitin-protein ligase ATL45 from Arabidopsis thaliana (Mouse-ear cress).